The sequence spans 306 residues: Small ribosomal subunit protein uS2 (306 aa).

Positions 229-238 are enriched in basic and acidic residues; the sequence is GEESAAEERP. A disordered region spans residues 229–306; that stretch reads GEESAAEERP…VGEGDESEER (78 aa). Over residues 261–287 the composition is skewed to acidic residues; that stretch reads QPGEPEAEAFEEAAGEPEDSTEEEAAE.

This sequence belongs to the universal ribosomal protein uS2 family.

This chain is Small ribosomal subunit protein uS2, found in Rubrobacter xylanophilus (strain DSM 9941 / JCM 11954 / NBRC 16129 / PRD-1).